Consider the following 242-residue polypeptide: 1-(5-phosphoribosyl)-5-[(5-phosphoribosylamino)methylideneamino] imidazole-4-carboxamide isomerase (242 aa).

Aspartate 10 acts as the Proton acceptor in catalysis. The Proton donor role is filled by aspartate 131.

The protein belongs to the HisA/HisF family.

It localises to the cytoplasm. The enzyme catalyses 1-(5-phospho-beta-D-ribosyl)-5-[(5-phospho-beta-D-ribosylamino)methylideneamino]imidazole-4-carboxamide = 5-[(5-phospho-1-deoxy-D-ribulos-1-ylimino)methylamino]-1-(5-phospho-beta-D-ribosyl)imidazole-4-carboxamide. The protein operates within amino-acid biosynthesis; L-histidine biosynthesis; L-histidine from 5-phospho-alpha-D-ribose 1-diphosphate: step 4/9. This Granulibacter bethesdensis (strain ATCC BAA-1260 / CGDNIH1) protein is 1-(5-phosphoribosyl)-5-[(5-phosphoribosylamino)methylideneamino] imidazole-4-carboxamide isomerase.